A 473-amino-acid polypeptide reads, in one-letter code: MGQSGRSRHQKRARAQAQLRNLEAYAANPHSFVFTRGCTGRNIRQLSLDVRRVMEPLTASRLQVRKKNSLKDCVAVAGPLGVTHFLILSKTETNVYFKLMRLPGGPTLTFQVKKYSLVRDVVSSLRRHRMHEQQFAHPPLLVLNSFGPHGMHVKLMATMFQNLFPSINVHKVNLNTIKRCLLIDYNPDSQELDFRHYSIKVVPVGASRGMKKLLQEKFPNMSRLQDISELLATGAGLSESEAEPDGDHNITELPQAVAGRGNMRAQQSAVRLTEIGPRMTLQLIKVQEGVGEGKVMFHSFVSKTEEELQAILEAKEKKLRLKAQRQAQQAQNVQRKQEQREAHRKKSLEGMKKARVGGSDEEASGIPSRTASLELGEDDDEQEDDDIEYFCQAVGEAPSEDLFPEAKQKRLAKSPGRKRKRWEMDRGRGRLCDQKFPKTKDKSQGAQARRGPRGASRDGGRGRGRGRPGKRVA.

Residues 29 to 292 enclose the Brix domain; it reads PHSFVFTRGC…LIKVQEGVGE (264 aa). S238 and S240 each carry phosphoserine. Residues 323-473 form a disordered region; that stretch reads AQRQAQQAQN…GRGRPGKRVA (151 aa). Residues 324–334 show a composition bias toward low complexity; it reads QRQAQQAQNVQ. Residues 335–352 are compositionally biased toward basic and acidic residues; it reads RKQEQREAHRKKSLEGMK. Residue S359 is modified to Phosphoserine. The segment covering 375 to 388 has biased composition (acidic residues); it reads LGEDDDEQEDDDIE. Over residues 409-421 the composition is skewed to basic residues; that stretch reads KRLAKSPGRKRKR. The span at 422 to 443 shows a compositional bias: basic and acidic residues; it reads WEMDRGRGRLCDQKFPKTKDKS. Residue K438 is modified to N6-acetyllysine. Over residues 462-473 the composition is skewed to basic residues; the sequence is GRGRGRPGKRVA.

As to expression, widely expressed.

The protein resides in the nucleus. It is found in the nucleolus. In terms of biological role, may have a role in cell growth. The sequence is that of Suppressor of SWI4 1 homolog (PPAN) from Homo sapiens (Human).